The chain runs to 83 residues: Short neurotoxin C (83 aa).

A signal peptide spans 1–21 (MKTLLLTLVVVTMVCLDLAYT). Disulfide bonds link cysteine 24–cysteine 45, cysteine 38–cysteine 62, cysteine 64–cysteine 75, and cysteine 76–cysteine 81.

It belongs to the three-finger toxin family. Short-chain subfamily. Type I alpha-neurotoxin sub-subfamily. Expressed by the venom gland.

The protein resides in the secreted. Functionally, binds to muscle nicotinic acetylcholine receptor (nAChR) and inhibit acetylcholine from binding to the receptor, thereby impairing neuromuscular transmission. The chain is Short neurotoxin C from Laticauda colubrina (Yellow-lipped sea krait).